The chain runs to 248 residues: 21S rRNA pseudouridine(2819) synthase (248 aa).

The active site involves D58.

It belongs to the pseudouridine synthase RluA family.

It localises to the mitochondrion. The enzyme catalyses uridine(2819) in 21S rRNA = pseudouridine(2819) in 21S rRNA. Pseudouridylate synthase responsible for the pseudouridine-2819 formation in mitochondrial 21S rRNA. May modulate the efficiency or the fidelity of the mitochondrial translation machinery. The chain is 21S rRNA pseudouridine(2819) synthase (PUS5) from Candida albicans (strain SC5314 / ATCC MYA-2876) (Yeast).